A 96-amino-acid polypeptide reads, in one-letter code: uncharacterized protein (96 aa).

Positions 1–30 (MLILSVFCAVFYAFLTAIVANFSLKTLAIG) are cleaved as a signal peptide. Residues 31 to 54 (ATFVKSHLKSNPIPYGDLVADSLD) lie on the Extracellular side of the membrane. A helical membrane pass occupies residues 55-75 (FGNITPTVTLLFAILIAVLAL). Over 76-96 (KCEFSCSTSAPAGQASGRKVK) the chain is Cytoplasmic.

It localises to the membrane. This is an uncharacterized protein from Dictyostelium discoideum (Social amoeba).